Reading from the N-terminus, the 95-residue chain is MSDNVIDKLYSIILDRMKTMKEGSYTVELIKRGKHYVAQKVGEESTEAIIASLVESQQRFVEEVSDLIYHLLVLMALENVTPQDVYKELERRMKK.

Belongs to the PRA-PH family.

The protein resides in the cytoplasm. The catalysed reaction is 1-(5-phospho-beta-D-ribosyl)-ATP + H2O = 1-(5-phospho-beta-D-ribosyl)-5'-AMP + diphosphate + H(+). It participates in amino-acid biosynthesis; L-histidine biosynthesis; L-histidine from 5-phospho-alpha-D-ribose 1-diphosphate: step 2/9. In Sulfolobus acidocaldarius (strain ATCC 33909 / DSM 639 / JCM 8929 / NBRC 15157 / NCIMB 11770), this protein is Phosphoribosyl-ATP pyrophosphatase.